The primary structure comprises 544 residues: MSSKLLRGTFVLTLGTYISRILGMVYLIPFSIMVGATGGALFQYGYNQYTLFLNIATMGFPAAVSKFVSKYNSKGDYETSRKMLKAGMSVMLVTGMIAFFILYLSAPMFAEISLGGKDNNGLTIDHVVYVIRMVSLALLVVPIMSLVRGFFQGHQMMGPTAVSQVVEQIVRIIFLLSATFLILKVFNGGLVIAVGYATFAALIGAFGGLVVLYIYWNKRKGSLLAMMPNTGPTANLSYKKMFFELFSYAAPYVFVGLAIPLYNYIDTNTFNKAMIEAGHQAISQDMLAILTLYVQKLVMIPVSLATAFGLTLIPTITESFTSGNYKLLNQQINQTMQTILFLIIPAVVGISLLSGPTYTFFYGSESLHPELGANILLWYSPVAILFSLFTVNAAILQGINKQKFAVVSLVIGVVIKLVLNVPLIKLMQADGAILATALGYIASLLYGFIMIKRHAGYSYKILVKRTVLMLVLSAIMGIAVKIVQWVLGFFISYQDGQMQAAIVVVIAAAVGGAVYLYCGYRLGFLQKILGRRLPGFFRKGRHAG.

The next 14 helical transmembrane spans lie at 21-41, 49-69, 90-110, 127-147, 169-189, 191-211, 241-261, 297-317, 338-358, 375-395, 404-424, 431-451, 471-491, and 500-520; these read ILGM…GGAL, YTLF…KFVS, VMLV…PMFA, VVYV…MSLV, IVRI…FNGG, VIAV…GLVV, MFFE…AIPL, LVMI…PTIT, TILF…GPTY, ILLW…NAAI, FAVV…VPLI, GAIL…FIMI, VLSA…GFFI, and AAIV…YCGY.

Belongs to the polysaccharide synthase family.

The protein localises to the cell membrane. It participates in cell wall biogenesis; peptidoglycan biosynthesis. Its function is as follows. Involved in peptidoglycan biosynthesis. Transports lipid-linked peptidoglycan precursors from the inner to the outer leaflet of the cytoplasmic membrane. Not essential for growth. This is Lipid II flippase MurJ from Bacillus subtilis (strain 168).